We begin with the raw amino-acid sequence, 875 residues long: GATOR2 complex protein MIOS (875 aa).

WD repeat units follow at residues 61–100 (PYMK…NSKF), 111–155 (KHAR…TPDI), 182–221 (GQND…QKMF), 223–261 (NTKA…KPVL), 265–306 (EQPK…TPIG), and 395–437 (RLRA…KQYT). The segment at 735 to 781 (VSCNFCGKSISYSCSAVPHQGRGFSQYGVSGSPTKSKVTSCPGCRKP) adopts a C4-type zinc-finger fold. Cys737 and Cys740 together coordinate Zn(2+). Ser759 and Ser766 each carry phosphoserine. Zn(2+) is bound by residues Cys775, Cys778, Cys788, Cys827, Cys830, His832, His835, His838, Cys849, Cys854, and Cys858. The RING-type; atypical zinc finger occupies 782 to 863 (LPRCALCLIN…CTCKCMQLDT (82 aa)).

The protein belongs to the WD repeat mio family. In terms of assembly, component of the GATOR2 subcomplex, composed of MIOS, SEC13, SEH1L, WDR24 and WDR59. The GATOR2 complex interacts with CASTOR1 and CASTOR2; the interaction is negatively regulated by arginine. CASTOR1 and CASTOR2 convey leucine availability via direct interaction with MIOS. The GATOR2 complex interacts with SESN1, SESN2 and SESN3; the interaction is negatively regulated by amino acids. Interacts with SAR1A and SAR1B; the interaction is direct, disrupted by leucine and mediates the interaction of SAR1A or SAR1B with the GATOR2 complex to negatively regulate the TORC1 signaling upon leucine deprivation.

It localises to the lysosome membrane. Its activity is regulated as follows. The GATOR2 complex is negatively regulated by the upstream amino acid sensors CASTOR1 and SESN2, which sequester the GATOR2 complex in absence of amino acids. In the presence of abundant amino acids, GATOR2 is released from CASTOR1 and SESN2 and activated. Its function is as follows. As a component of the GATOR2 complex, functions as an activator of the amino acid-sensing branch of the mTORC1 signaling pathway. The GATOR2 complex indirectly activates mTORC1 through the inhibition of the GATOR1 subcomplex. GATOR2 probably acts as an E3 ubiquitin-protein ligase toward GATOR1. In the presence of abundant amino acids, the GATOR2 complex mediates ubiquitination of the NPRL2 core component of the GATOR1 complex, leading to GATOR1 inactivation. In the absence of amino acids, GATOR2 is inhibited, activating the GATOR1 complex. Within the GATOR2 complex, MIOS is required to prevent autoubiquitination of WDR24, the catalytic subunit of the complex. The GATOR2 complex is required for brain myelination. The sequence is that of GATOR2 complex protein MIOS from Pongo abelii (Sumatran orangutan).